Here is a 372-residue protein sequence, read N- to C-terminus: CXADR-like membrane protein (372 aa).

Residues 1–17 (MSLFFLWLVTYYVGTLG) form the signal peptide. Ig-like C2-type domains lie at 18–126 (THTE…VILK) and 134–223 (PKCE…VRVT). Residues 18–234 (THTEIKRVAE…QYVQSIGMVA (217 aa)) lie on the Extracellular side of the membrane. 2 disulfides stabilise this stretch: cysteine 34/cysteine 110 and cysteine 152/cysteine 207. 2 N-linked (GlcNAc...) asparagine glycosylation sites follow: asparagine 73 and asparagine 196. Residues 235–255 (GAVTGIVAGALLIFLLIWLLI) form a helical membrane-spanning segment. Residues 256–372 (RRKSKERYEE…PSQSRAFQTV (117 aa)) are Cytoplasmic-facing. Basic and acidic residues predominate over residues 263–280 (YEEEDRPNEIREDAEAPR). Positions 263–372 (YEEEDRPNEI…PSQSRAFQTV (110 aa)) are disordered. Composition is skewed to low complexity over residues 287 to 313 (SSSS…ASRS) and 352 to 361 (LTKAETTLST). Positions 362-372 (MPSQSRAFQTV) are enriched in polar residues.

In terms of tissue distribution, predominantly expressed in the white adipose tissue.

Its subcellular location is the cell junction. The protein resides in the tight junction. It is found in the cell membrane. Its function is as follows. May be involved in the cell-cell adhesion. May play a role in adipocyte differentiation and development of obesity. Is required for normal small intestine development. The polypeptide is CXADR-like membrane protein (Clmp) (Rattus norvegicus (Rat)).